Reading from the N-terminus, the 316-residue chain is 4-diphosphocytidyl-2-C-methyl-D-erythritol kinase (316 aa).

Lysine 32 is an active-site residue. 126–136 (PVGAGLGGGSA) contacts ATP. Aspartate 168 is an active-site residue.

Belongs to the GHMP kinase family. IspE subfamily.

It carries out the reaction 4-CDP-2-C-methyl-D-erythritol + ATP = 4-CDP-2-C-methyl-D-erythritol 2-phosphate + ADP + H(+). Its pathway is isoprenoid biosynthesis; isopentenyl diphosphate biosynthesis via DXP pathway; isopentenyl diphosphate from 1-deoxy-D-xylulose 5-phosphate: step 3/6. Catalyzes the phosphorylation of the position 2 hydroxy group of 4-diphosphocytidyl-2C-methyl-D-erythritol. This Bifidobacterium longum (strain NCC 2705) protein is 4-diphosphocytidyl-2-C-methyl-D-erythritol kinase.